A 789-amino-acid polypeptide reads, in one-letter code: Ent-kaurene synthase TSP4, chloroplastic (789 aa).

2 residues coordinate Mg(2+): Asp540 and Asp544. Positions 540 to 544 (DDFFD) match the DDXXD motif motif. The chain crosses the membrane as a helical span at residues 638–656 (AYVSFALGPIVLPALYLVG). 3 residues coordinate Mg(2+): Asn684, Arg687, and Glu692.

This sequence belongs to the terpene synthase family. The cofactor is Mg(2+). As to expression, expressed in leaves and fruits, including trichomes.

It localises to the plastid. It is found in the chloroplast membrane. The catalysed reaction is ent-copalyl diphosphate = ent-kaur-16-ene + diphosphate. The protein operates within plant hormone biosynthesis; gibberellin biosynthesis. Its function is as follows. Involved in the biosynthesis of labdane-type diterpenoid including cleroda-dienols, and peregrinol lactones and furan derivatives, dopaminergic diterpenoids that can bind to dopamine receptors in the human pituitary gland, have probably ability to lower prolactin levels, and are used to treat menstrual cycle disorders (e.g. premenstrual syndrome and mastodynia). Terpene synthase that produces ent-kaurene from ent-copalyl diphosphate. This Vitex agnus-castus (Chaste tree) protein is Ent-kaurene synthase TSP4, chloroplastic.